Here is an 862-residue protein sequence, read N- to C-terminus: DNA mismatch repair protein MutS (862 aa).

608–615 (GPNMAGKS) lines the ATP pocket.

The protein belongs to the DNA mismatch repair MutS family.

This protein is involved in the repair of mismatches in DNA. It is possible that it carries out the mismatch recognition step. This protein has a weak ATPase activity. In Borreliella afzelii (strain PKo) (Borrelia afzelii), this protein is DNA mismatch repair protein MutS.